A 464-amino-acid polypeptide reads, in one-letter code: Glutamate--tRNA ligase (464 aa).

The 'HIGH' region signature appears at 11 to 21 (PSPTGYLHIGG). The 'KMSKS' region signature appears at 253-257 (KLSKR). K256 provides a ligand contact to ATP.

The protein belongs to the class-I aminoacyl-tRNA synthetase family. Glutamate--tRNA ligase type 1 subfamily. Monomer.

It is found in the cytoplasm. It carries out the reaction tRNA(Glu) + L-glutamate + ATP = L-glutamyl-tRNA(Glu) + AMP + diphosphate. In terms of biological role, catalyzes the attachment of glutamate to tRNA(Glu) in a two-step reaction: glutamate is first activated by ATP to form Glu-AMP and then transferred to the acceptor end of tRNA(Glu). The polypeptide is Glutamate--tRNA ligase (Metamycoplasma arthritidis (strain 158L3-1) (Mycoplasma arthritidis)).